Reading from the N-terminus, the 348-residue chain is tRNA N6-adenosine threonylcarbamoyltransferase (348 aa).

Residues H111 and H115 each contribute to the Fe cation site. Substrate-binding positions include 134–138 (LVSGG), D167, G180, and N276. D304 is a binding site for Fe cation.

Belongs to the KAE1 / TsaD family. The cofactor is Fe(2+).

Its subcellular location is the cytoplasm. The catalysed reaction is L-threonylcarbamoyladenylate + adenosine(37) in tRNA = N(6)-L-threonylcarbamoyladenosine(37) in tRNA + AMP + H(+). In terms of biological role, required for the formation of a threonylcarbamoyl group on adenosine at position 37 (t(6)A37) in tRNAs that read codons beginning with adenine. Is involved in the transfer of the threonylcarbamoyl moiety of threonylcarbamoyl-AMP (TC-AMP) to the N6 group of A37, together with TsaE and TsaB. TsaD likely plays a direct catalytic role in this reaction. This Bordetella petrii (strain ATCC BAA-461 / DSM 12804 / CCUG 43448) protein is tRNA N6-adenosine threonylcarbamoyltransferase.